The chain runs to 228 residues: GrpE protein homolog, mitochondrial (228 aa).

Residues 46–57 (DEAKSEESKENN) show a composition bias toward basic and acidic residues. The disordered stretch occupies residues 46 to 66 (DEAKSEESKENNEDLTEEQSE).

This sequence belongs to the GrpE family. As to quaternary structure, component of the PAM complex, at least composed of SSC1 (mtHsp70), MGE1, TIM44, PAM16/TIM16, PAM17 and PAM18/TIM14. Interacts with SSQ1. The N-terminus is blocked.

The protein localises to the mitochondrion matrix. Functionally, essential component of the PAM complex, a complex required for the translocation of transit peptide-containing proteins from the inner membrane into the mitochondrial matrix in an ATP-dependent manner. Seems to control the nucleotide-dependent binding of SSC1 to substrate proteins and the association of SSC1 with TIM44. In Saccharomyces cerevisiae (strain ATCC 204508 / S288c) (Baker's yeast), this protein is GrpE protein homolog, mitochondrial (MGE1).